Here is a 348-residue protein sequence, read N- to C-terminus: L-threonine 3-dehydrogenase (348 aa).

Cys38 lines the Zn(2+) pocket. Residues Thr40 and His43 each act as charge relay system in the active site. Zn(2+)-binding residues include His63, Glu64, Cys93, Cys96, Cys99, and Cys107. Residues Ile175, Asp195, Arg200, 263-265 (LGI), and 287-288 (IY) each bind NAD(+).

Belongs to the zinc-containing alcohol dehydrogenase family. In terms of assembly, homotetramer. It depends on Zn(2+) as a cofactor.

It is found in the cytoplasm. It carries out the reaction L-threonine + NAD(+) = (2S)-2-amino-3-oxobutanoate + NADH + H(+). Its pathway is amino-acid degradation; L-threonine degradation via oxydo-reductase pathway; glycine from L-threonine: step 1/2. Functionally, catalyzes the NAD(+)-dependent oxidation of L-threonine to 2-amino-3-ketobutyrate. This Deinococcus radiodurans (strain ATCC 13939 / DSM 20539 / JCM 16871 / CCUG 27074 / LMG 4051 / NBRC 15346 / NCIMB 9279 / VKM B-1422 / R1) protein is L-threonine 3-dehydrogenase.